We begin with the raw amino-acid sequence, 307 residues long: MNDTIPATGHLLGAADIRRIAADAGISPTKKFGQNFVIDPGTVRRIVREAGVTAANHVMEVGPGLGSLTLAILETGATMTAVEIDPPLAERLPGTVAEFMPEATSRLTVVNRDALTVTPENVPDFSDDASFTLVANLPYNVATPILLTLLERFDNLGSFLVMVQKEVADRLAAKPGSKIYGTPSVKLAWYGTAERVGTIGRNVFWPAPNVDSALVKFTRYQADDPAAPGTANSTDDGTQRELVFRLIDAAFGQRRKTLHAALKTIAPSEAFSIAGIDPTRRGETLTIAEFTALAKAIESCGDGDEAQ.

The S-adenosyl-L-methionine site is built by Asn35, Val37, Gly62, Glu83, Asp113, and Asn136.

It belongs to the class I-like SAM-binding methyltransferase superfamily. rRNA adenine N(6)-methyltransferase family. RsmA subfamily.

Its subcellular location is the cytoplasm. It carries out the reaction adenosine(1518)/adenosine(1519) in 16S rRNA + 4 S-adenosyl-L-methionine = N(6)-dimethyladenosine(1518)/N(6)-dimethyladenosine(1519) in 16S rRNA + 4 S-adenosyl-L-homocysteine + 4 H(+). In terms of biological role, specifically dimethylates two adjacent adenosines (A1518 and A1519) in the loop of a conserved hairpin near the 3'-end of 16S rRNA in the 30S particle. May play a critical role in biogenesis of 30S subunits. The chain is Ribosomal RNA small subunit methyltransferase A from Bifidobacterium longum (strain DJO10A).